The following is a 269-amino-acid chain: Regulatory protein RecX (269 aa).

This sequence belongs to the RecX family.

The protein resides in the cytoplasm. In terms of biological role, modulates RecA activity. This is Regulatory protein RecX from Listeria monocytogenes serotype 4b (strain F2365).